The following is a 380-amino-acid chain: Cytochrome b (380 aa).

4 helical membrane passes run 33-53 (FGSL…FLAM), 77-98 (WLIR…YLHI), 113-133 (WNVG…GYVL), and 178-198 (FFAF…IHLL). Residues histidine 83 and histidine 97 each coordinate heme b. Heme b contacts are provided by histidine 182 and histidine 196. Histidine 201 contacts a ubiquinone. Helical transmembrane passes span 226 to 246 (YKDL…ALFS), 288 to 308 (LGGV…PALH), 320 to 340 (ITQL…WIGG), and 347 to 367 (FIII…TLIP).

This sequence belongs to the cytochrome b family. In terms of assembly, the cytochrome bc1 complex contains 3 respiratory subunits (MT-CYB, CYC1 and UQCRFS1), 2 core proteins (UQCRC1 and UQCRC2) and probably 6 low-molecular weight proteins. Requires heme b as cofactor.

It localises to the mitochondrion inner membrane. In terms of biological role, component of the ubiquinol-cytochrome c reductase complex (complex III or cytochrome b-c1 complex) that is part of the mitochondrial respiratory chain. The b-c1 complex mediates electron transfer from ubiquinol to cytochrome c. Contributes to the generation of a proton gradient across the mitochondrial membrane that is then used for ATP synthesis. This Percopsis transmontana (Sand roller) protein is Cytochrome b (mt-cyb).